A 360-amino-acid polypeptide reads, in one-letter code: MAKQVLILPGDGIGPEIVAQARNVLDVVNNKFSLGLTFTEGLVGGAAIDTTGVPFPEETLATAEAADAILLGAVGGPKWDKLDMAIRPEKGLLGLRSGLELFANLRPAILYPQLAEASSLRPEVVAGLDILIVRELTGGIYFGKPRGVRTLENGEREGFNTYVYSESEIRRIGRVAFEAAQKRNKRLCSVDKANVLEVTVLWREVMDELAKEYPDVELSHMYVDNAAMQLVRAPKQFDVIVTGNMFGDILSDEAAMLTGSIGMLPSASLNAAGKGMYEPCHGSAPDIAGQNMANPLATILSAAMMLRYSLAAEDAAAAIEQAVSDVLDQGLRTRDIAGSSGESVSTQAMGEAVARVLADR.

76 to 89 (GPKWDKLDMAIRPE) is an NAD(+) binding site. Positions 96, 106, 134, and 224 each coordinate substrate. Residues Asp224, Asp248, and Asp252 each contribute to the Mg(2+) site. 282–294 (GSAPDIAGQNMAN) provides a ligand contact to NAD(+).

The protein belongs to the isocitrate and isopropylmalate dehydrogenases family. LeuB type 1 subfamily. Homodimer. It depends on Mg(2+) as a cofactor. Mn(2+) is required as a cofactor.

It is found in the cytoplasm. It catalyses the reaction (2R,3S)-3-isopropylmalate + NAD(+) = 4-methyl-2-oxopentanoate + CO2 + NADH. Its pathway is amino-acid biosynthesis; L-leucine biosynthesis; L-leucine from 3-methyl-2-oxobutanoate: step 3/4. Functionally, catalyzes the oxidation of 3-carboxy-2-hydroxy-4-methylpentanoate (3-isopropylmalate) to 3-carboxy-4-methyl-2-oxopentanoate. The product decarboxylates to 4-methyl-2 oxopentanoate. The chain is 3-isopropylmalate dehydrogenase from Hahella chejuensis (strain KCTC 2396).